A 309-amino-acid chain; its full sequence is Taste receptor type 2 member 46 (309 aa).

A topological domain (extracellular) is located at residue Met-1. A helical membrane pass occupies residues 2-22; sequence ITFLPITFSILIVVIFFIGNF. The Cytoplasmic segment spans residues 23–46; the sequence is ANGFIALINSIEWVKRQKISFAGQ. A helical membrane pass occupies residues 47-67; sequence ILTALAVSRVGLLWVLSLHWY. The Extracellular segment spans residues 68-86; the sequence is ATEFNLAFHSVEVRSTAYN. The chain crosses the membrane as a helical span at residues 87–107; sequence VWVVTNHFSNWLSTSLSMFYL. Over 108–126 the chain is Cytoplasmic; the sequence is LRIATFSNLIFLHLNRRVK. Residues 127–147 traverse the membrane as a helical segment; sequence SVILVTLLGPLLFLVCQLFVM. Residues 148–178 are Extracellular-facing; sequence NMNQIVRTKEYEGNMTWKIKLKSAMYLSNTT. N-linked (GlcNAc...) asparagine glycans are attached at residues Asn-161 and Asn-176. A helical membrane pass occupies residues 179 to 199; it reads VAMLANFVPLTLTLISFLLLI. Residues 200–229 are Cytoplasmic-facing; that stretch reads CSLCKHLKKMRVHGKGSQDPSTKVHTKALQ. Residues 230-250 form a helical membrane-spanning segment; the sequence is IVTSFLLVCAIYFLSIILSVW. Topologically, residues 251 to 259 are extracellular; the sequence is NSGGLENKP. The chain crosses the membrane as a helical span at residues 260-280; the sequence is FFMFCQAIKFSYPSTHPFILI. At 281–309 the chain is on the cytoplasmic side; the sequence is WGNKTLKQTFLSVLRNVRYWVKGQKPSSP.

Belongs to the G-protein coupled receptor T2R family.

Its subcellular location is the membrane. The protein resides in the cell projection. It localises to the cilium membrane. Its function is as follows. Receptor that may play a role in the perception of bitterness and is gustducin-linked. May play a role in sensing the chemical composition of the gastrointestinal content. The activity of this receptor may stimulate alpha gustducin, mediate PLC-beta-2 activation and lead to the gating of TRPM5. In airway epithelial cells, binding of bitter compounds increases the intracellular calcium ion concentration and stimulates ciliary beat frequency. The protein is Taste receptor type 2 member 46 (TAS2R46) of Papio hamadryas (Hamadryas baboon).